The primary structure comprises 239 residues: Leucyl/phenylalanyl-tRNA--protein transferase (239 aa).

It belongs to the L/F-transferase family.

The protein resides in the cytoplasm. It catalyses the reaction N-terminal L-lysyl-[protein] + L-leucyl-tRNA(Leu) = N-terminal L-leucyl-L-lysyl-[protein] + tRNA(Leu) + H(+). It carries out the reaction N-terminal L-arginyl-[protein] + L-leucyl-tRNA(Leu) = N-terminal L-leucyl-L-arginyl-[protein] + tRNA(Leu) + H(+). The catalysed reaction is L-phenylalanyl-tRNA(Phe) + an N-terminal L-alpha-aminoacyl-[protein] = an N-terminal L-phenylalanyl-L-alpha-aminoacyl-[protein] + tRNA(Phe). Its function is as follows. Functions in the N-end rule pathway of protein degradation where it conjugates Leu, Phe and, less efficiently, Met from aminoacyl-tRNAs to the N-termini of proteins containing an N-terminal arginine or lysine. In Aliivibrio fischeri (strain MJ11) (Vibrio fischeri), this protein is Leucyl/phenylalanyl-tRNA--protein transferase.